A 78-amino-acid polypeptide reads, in one-letter code: Exodeoxyribonuclease 7 small subunit (78 aa).

It belongs to the XseB family. In terms of assembly, heterooligomer composed of large and small subunits.

The protein localises to the cytoplasm. It carries out the reaction Exonucleolytic cleavage in either 5'- to 3'- or 3'- to 5'-direction to yield nucleoside 5'-phosphates.. Bidirectionally degrades single-stranded DNA into large acid-insoluble oligonucleotides, which are then degraded further into small acid-soluble oligonucleotides. This chain is Exodeoxyribonuclease 7 small subunit, found in Synechococcus sp. (strain JA-3-3Ab) (Cyanobacteria bacterium Yellowstone A-Prime).